Consider the following 611-residue polypeptide: MEKEGVCDTINLSDQMYPDEPFCSEMKTETIASSQKFEGGEGSKVVFSREAPLIGKDSAGTNSGECCGCSAKKLNFKGDDDLVEKENIEQQKKLNRQERIELGRLFQGAVTSLDWELAERLIQLADPQTLNDLLCVGLDSVWFLSTKPEFQGITGLIKKIICHGAHDFTRATLRTSFLASCVSACQSRTMSLSDTVTVMAQRLHERLQECNGDEILKAEAGAKVQKFTEWALKCIGFHSRCQGAKDRVSQNSAAEIELQLSAFKMFLDLAGNHLSGRDFTEAFDAACFPLTLFSNSFDPGWASGMSATVIQGLLGMLVEGGADNVNQCFLEASRFGSTELVRVLLQIAQRNSLDVDVDLALGFASHYCKIGTMKCLVEEGNAIAFLGPLMRAAERGCMQVVQWFVKRGCRDMELCLALTAATSSCQVEVAAYLLPRVPPPVLTALSIEILKAAGERSGGSLQGVEFLLKSDFLGDSTATYSVADSIARSSEDESVPSDLKSFLQEHWSESAFEKGMRESHDDFMNFMRVLKKGESAISLRDLPAPLRVAIAYMPLYRECMKADGRLLSQRLRGQLVEAVRQLQGCAVAVVEVSQTRNLMAVLEHHLTAIFD.

ANK repeat units follow at residues 292-322 (LFSN…EGGA), 323-353 (DNVN…RNSL), 356-384 (DVDL…NAIA), 385-414 (FLGP…DMEL), 416-442 (LALT…PPVL), and 445-478 (LSIE…DSTA).

As to quaternary structure, interacts with SKP1A/ASK1.

This is Ankyrin repeat protein SKIP35 (SKIP35) from Arabidopsis thaliana (Mouse-ear cress).